A 96-amino-acid polypeptide reads, in one-letter code: YcgL domain-containing protein VS_0884 (96 aa).

One can recognise a YcgL domain in the interval 1-84 (MLCSIYKSSK…PPVNELELHK (84 aa)).

In Vibrio atlanticus (strain LGP32) (Vibrio splendidus (strain Mel32)), this protein is YcgL domain-containing protein VS_0884.